Here is a 407-residue protein sequence, read N- to C-terminus: Membrane protein MosC (407 aa).

The tract at residues 1–24 (MTRTSPRHHAPSETKRRVPMGGVH) is disordered. Helical transmembrane passes span 31 to 51 (LTIT…AAWA), 69 to 89 (GVLL…AGYF), 109 to 129 (ALVL…IVLF), 157 to 177 (AFLH…FGVI), 186 to 206 (SVTL…HLLD), 225 to 245 (LLMF…IAEW), 255 to 275 (QVTD…MIAG), 290 to 310 (ALIA…LFMP), 316 to 336 (LAGF…IFSE), 347 to 367 (VGLT…PPII), and 377 to 397 (GRAL…SVFF).

It localises to the cell membrane. Functionally, may be a membrane transport protein that could either transport a precursor for rhizopine biosynthesis into bacteroids or the finished product from the bacteroids. This Rhizobium meliloti (Ensifer meliloti) protein is Membrane protein MosC (mosC).